The primary structure comprises 508 residues: MLGSKKKYIVNGNSGIKAQIQFADQKQEFNKRPTKIGRRSLSRSISQSSTDSYSSAASYTDSSDDETSPRDKQQKNSKGSSDFCVKNIKQAEFGRREIEIAEQEMPALMALRKRAQGEKPLAGAKIVGCTHITAQTAVLMETLGALGAQCRWAACNIYSTLNEVAAALAESGFPVFAWKGESEDDFWWCIDRCVNVEGWQPNMILDDGGDLTHWIYKKYPNMFKKIKGIVEESVTGVHRLYQLSKAGKLCVPAMNVNDSVTKQKFDNLYCCRESILDGLKRTTDMMFGGKQVVVCGYGEVGKGCCAALKAMGSIVYVTEIDPICALQACMDGFRLVKLNEVIRQVDIVITCTGNKNVVTREHLDRMKNSCIVCNIGHSNTEIDVASLRTPELTWERVRSQVDHVIWPDGKRIVLLAEGRLLNLSCSTVPTFVLSITATTQALALIELYNAPEGRYKQDVYLLPKKMDEYVASLHLPTFDAHLTELTDEQAKYLGLNKNGPFKPNYYRY.

The residue at position 4 (S4) is a Phosphoserine. The tract at residues 24-81 (DQKQEFNKRPTKIGRRSLSRSISQSSTDSYSSAASYTDSSDDETSPRDKQQKNSKGSS) is disordered. The span at 32–41 (RPTKIGRRSL) shows a compositional bias: basic residues. Low complexity predominate over residues 42–61 (SRSISQSSTDSYSSAASYTD). Phosphoserine is present on residues S46, S49, S52, and S55. Residues T133, D207, and E232 each coordinate substrate. 233 to 235 (SVT) is an NAD(+) binding site. K262 and D266 together coordinate substrate. NAD(+)-binding positions include N267, 298-303 (GEVGKG), E319, N354, 375-377 (IGH), and N422.

It belongs to the adenosylhomocysteinase family. In terms of assembly, homotetramer. Forms heteromultimers with AHCYL1 (via the C-terminal region). Interacts with ITPR1; with lower affinity than AHCYL1 and maybe via ITPR1. Interacts with SLC4A4. Interacts with ZCCHC4. The cofactor is NAD(+).

It localises to the cytoplasm. Its subcellular location is the microsome. The enzyme catalyses S-adenosyl-L-homocysteine + H2O = L-homocysteine + adenosine. It participates in amino-acid biosynthesis; L-homocysteine biosynthesis; L-homocysteine from S-adenosyl-L-homocysteine: step 1/1. May regulate the electrogenic sodium/bicarbonate cotransporter SLC4A4 activity and Mg(2+)-sensitivity. On the contrary of its homolog AHCYL1, does not regulate ITPR1 sensitivity to inositol 1,4,5-trisphosphate. This is Putative adenosylhomocysteinase 3 (AHCYL2) from Pongo abelii (Sumatran orangutan).